The following is a 663-amino-acid chain: NAD(P)H-quinone oxidoreductase subunit 5, chloroplastic (663 aa).

Transmembrane regions (helical) follow at residues 11-31, 41-61, 89-109, 126-146, 149-169, 189-209, 224-244, 260-280, 292-312, 329-349, 398-418, 436-456, 482-502, 528-548, 607-627, and 635-655; these read WLIP…LISF, LYGL…MNLL, FFID…AVLV, FFAY…SPNL, IYIF…FWFT, FCLL…DFIT, HLYF…AKSA, TPIS…FLVA, IMNL…TIAL, LGYM…FHLV, FTFL…CFWS, IAWI…LLAF, LYML…GFIS, ILLN…AYSI, WLFD…GQSL, and VSSY…FLPL.

This sequence belongs to the complex I subunit 5 family. As to quaternary structure, NDH is composed of at least 16 different subunits, 5 of which are encoded in the nucleus.

Its subcellular location is the plastid. It is found in the chloroplast thylakoid membrane. The catalysed reaction is a plastoquinone + NADH + (n+1) H(+)(in) = a plastoquinol + NAD(+) + n H(+)(out). It catalyses the reaction a plastoquinone + NADPH + (n+1) H(+)(in) = a plastoquinol + NADP(+) + n H(+)(out). Its function is as follows. NDH shuttles electrons from NAD(P)H:plastoquinone, via FMN and iron-sulfur (Fe-S) centers, to quinones in the photosynthetic chain and possibly in a chloroplast respiratory chain. The immediate electron acceptor for the enzyme in this species is believed to be plastoquinone. Couples the redox reaction to proton translocation, and thus conserves the redox energy in a proton gradient. This is NAD(P)H-quinone oxidoreductase subunit 5, chloroplastic (ndhF) from Chara vulgaris (Common stonewort).